A 233-amino-acid chain; its full sequence is ATP-dependent Clp protease proteolytic subunit 1 (233 aa).

S136 serves as the catalytic Nucleophile. Residue H161 is part of the active site.

Belongs to the peptidase S14 family. Fourteen ClpP subunits assemble into 2 heptameric rings which stack back to back to give a disk-like structure with a central cavity, resembling the structure of eukaryotic proteasomes.

It localises to the cytoplasm. The enzyme catalyses Hydrolysis of proteins to small peptides in the presence of ATP and magnesium. alpha-casein is the usual test substrate. In the absence of ATP, only oligopeptides shorter than five residues are hydrolyzed (such as succinyl-Leu-Tyr-|-NHMec, and Leu-Tyr-Leu-|-Tyr-Trp, in which cleavage of the -Tyr-|-Leu- and -Tyr-|-Trp bonds also occurs).. In terms of biological role, cleaves peptides in various proteins in a process that requires ATP hydrolysis. Has a chymotrypsin-like activity. Plays a major role in the degradation of misfolded proteins. This Bifidobacterium longum (strain NCC 2705) protein is ATP-dependent Clp protease proteolytic subunit 1.